The primary structure comprises 274 residues: Large ribosomal subunit protein uL2cz/uL2cy (274 aa).

2 disordered regions span residues methionine 1–valine 22 and asparagine 224–lysine 274.

This sequence belongs to the universal ribosomal protein uL2 family. In terms of assembly, part of the 50S ribosomal subunit.

Its subcellular location is the plastid. The protein localises to the chloroplast. The sequence is that of Large ribosomal subunit protein uL2cz/uL2cy (rpl2-A) from Helianthus annuus (Common sunflower).